The following is a 435-amino-acid chain: T-box transcription factor T (435 aa).

Positions 51–219 (LWLRFKELTN…YNPFAKAFLD (169 aa)) form a DNA-binding region, T-box. Disordered stretches follow at residues 280–310 (PALRNHRPSPYPSPYAHRNNSPTYSDNPSAC) and 384–412 (APLGHAVPAPSASGSPLYEGAPTATDVPD). Over residues 297–310 (RNNSPTYSDNPSAC) the composition is skewed to polar residues.

As to quaternary structure, monomer. Binds DNA as a monomer.

The protein resides in the nucleus. Its function is as follows. Involved in the transcriptional regulation of genes required for mesoderm formation and differentiation. Binds to a palindromic site (called T site) and activates gene transcription when bound to such a site. The sequence is that of T-box transcription factor T from Canis lupus familiaris (Dog).